The primary structure comprises 1093 residues: Small G protein signaling modulator 1 (1093 aa).

The RUN domain occupies 36-190 (HEDSSHIISF…EYTKMKTADH (155 aa)). The segment at 256–297 (LLYGKNNVLVQPRDDMEAVPGYLSLHQTADVMTLKWTPNQLM) is important for interaction with RAB9A and RAB9B. The required for interaction with RAP family members stretch occupies residues 301-350 (VGDLDYEKSVYWDYAVTIRLEEIVYLHCHQQVDSGGTVVLVSQDGIQRPP). Disordered stretches follow at residues 377 to 412 (DPPLWSQRGKGKVFPKLRKRSPQGSSESTSSDKEDD), 645 to 778 (DSTI…ELAV), and 810 to 838 (DGAVMDGWPGEADKPSRADSEDNLSEEPE). Residues 385 to 397 (GKGKVFPKLRKRS) are compositionally biased toward basic residues. The region spanning 562 to 1026 (GVQPEIRRAV…SVWETIWAAK (465 aa)) is the Rab-GAP TBC domain. The span at 647–676 (TISNESSQSCSSGRQNLRLQSDSSSSTQVF) shows a compositional bias: polar residues. Over residues 687 to 696 (AEGRSEEKHP) the composition is skewed to basic and acidic residues. Residues 702–736 (NPANGTCSPDSGHPSSHNFSSGLSEHSEPSLSTED) show a composition bias toward polar residues. Basic and acidic residues-rich tracts occupy residues 766–776 (TSRDEAPREEL) and 820–829 (EADKPSRADS).

It belongs to the RUTBC family. In terms of assembly, interacts with RAB9A (GTP-bound form) and RAB9B. Interacts with RAB3A, RAB4A, RAB5A, RAB8A, RAB11A, RAP1A, RAP1B, RAP2A and RAP2B. No interaction with RAB27A. Expressed only in brain.

The protein localises to the golgi apparatus. It localises to the trans-Golgi network. It is found in the cytoplasm. Its subcellular location is the cytoplasmic vesicle membrane. Its function is as follows. Interacts with numerous Rab family members, functioning as Rab effector for some, and as GTPase activator for others. Promotes GTP hydrolysis by RAB34 and RAB36. Probably functions as a GTPase effector with RAB9A and RAB9B; does not stimulate GTP hydrolysis with RAB9A and RAB9B. The chain is Small G protein signaling modulator 1 (Sgsm1) from Mus musculus (Mouse).